The chain runs to 525 residues: Phospho-2-dehydro-3-deoxyheptonate aldolase 1, chloroplastic (525 aa).

Positions 1–13 are enriched in polar residues; it reads MALSNASSLSTRS. Residues 1-35 are disordered; it reads MALSNASSLSTRSIYGGDLSHRPSNRQSSFTFHPA. The transit peptide at 1-52 directs the protein to the chloroplast; it reads MALSNASSLSTRSIYGGDLSHRPSNRQSSFTFHPAVNTKPKSVNLVTAVHAA.

It belongs to the class-II DAHP synthase family.

The protein resides in the plastid. Its subcellular location is the chloroplast. The catalysed reaction is D-erythrose 4-phosphate + phosphoenolpyruvate + H2O = 7-phospho-2-dehydro-3-deoxy-D-arabino-heptonate + phosphate. Its pathway is metabolic intermediate biosynthesis; chorismate biosynthesis; chorismate from D-erythrose 4-phosphate and phosphoenolpyruvate: step 1/7. The protein is Phospho-2-dehydro-3-deoxyheptonate aldolase 1, chloroplastic (DHS1) of Arabidopsis thaliana (Mouse-ear cress).